The primary structure comprises 295 residues: Malonyl-[acyl-carrier protein] O-methyltransferase (295 aa).

Belongs to the methyltransferase superfamily.

The catalysed reaction is malonyl-[ACP] + S-adenosyl-L-methionine = malonyl-[ACP] methyl ester + S-adenosyl-L-homocysteine. The protein operates within cofactor biosynthesis; biotin biosynthesis. Its function is as follows. Converts the free carboxyl group of a malonyl-thioester to its methyl ester by transfer of a methyl group from S-adenosyl-L-methionine (SAM). It allows to synthesize pimeloyl-ACP via the fatty acid synthetic pathway. This is Malonyl-[acyl-carrier protein] O-methyltransferase from Xylella fastidiosa (strain M23).